The sequence spans 108 residues: Cell division protein FtsL (108 aa).

Topologically, residues 1–24 (MSKDTASQPSLTKLIGLDIFGVGR) are cytoplasmic. Residues 25–45 (LHAILLICIFLSAIGVVLATH) form a helical membrane-spanning segment. At 46 to 108 (NTRQMTVQRE…PDKEVIIKLR (63 aa)) the chain is on the periplasmic side.

This sequence belongs to the FtsL family. Part of a complex composed of FtsB, FtsL and FtsQ.

Its subcellular location is the cell inner membrane. In terms of biological role, essential cell division protein. May link together the upstream cell division proteins, which are predominantly cytoplasmic, with the downstream cell division proteins, which are predominantly periplasmic. In Aliivibrio fischeri (strain ATCC 700601 / ES114) (Vibrio fischeri), this protein is Cell division protein FtsL.